Reading from the N-terminus, the 604-residue chain is Putative O-acetyltransferase SAV0974 (604 aa).

11 consecutive transmembrane segments (helical) span residues 15–35 (YMPG…IYHL), 43–63 (GFLG…SLLL), 85–105 (LLPA…LLKS), 150–170 (AIEE…LLTI), 176–196 (IGFI…FIYS), 212–232 (LQTL…KLKN), 240–260 (YVID…FFII), 267–287 (IYDG…ASVV), 310–330 (YSLY…YVDG), 332–352 (IPVY…ELSY), and 377–397 (FIRM…LVGA). Catalysis depends on residues Ser-459, Asp-581, and His-584.

This sequence belongs to the acyltransferase 3 family.

Its subcellular location is the cell membrane. This chain is Putative O-acetyltransferase SAV0974, found in Staphylococcus aureus (strain Mu50 / ATCC 700699).